Here is a 312-residue protein sequence, read N- to C-terminus: MKASKRWVALAAATLTLFTATGTAQAANLIAIITPSHDNPFFKAEADTANARAKALGYDTIVLVHDDDANKQSNLVDTAIARGAKAIILDNAGSEASISAVRKAKAAGIPSFLIDREINATGIAVSQIVSNNYQGAQLGGRAFVKALGEKGNYVELVGREADINAGIRSKGYHDVIDQFPNMKMVERQSANWSQTEAYRVMETILQSHPDVKGVIAGNDTMAMGASAALKAAKRSDVIVVGFDGSNDVRDAIMRNDIRATVLQPAALAATEAVEQADKYMKTGSTGKPEKQLINCSLITKANAGKLDMFALR.

The signal sequence occupies residues 1 to 26 (MKASKRWVALAAATLTLFTATGTAQA). D-apiofuranose contacts are provided by residues Asn-39, 115-116 (DR), 162-164 (DIN), Arg-168, Asn-218, Asp-243, and Gln-263.

The protein belongs to the bacterial solute-binding protein 2 family.

It is found in the periplasm. Part of an ABC transporter complex involved in D-apiose import. Binds D-apiose, D-ribose and D-ribulose. This Paraburkholderia graminis (strain ATCC 700544 / DSM 17151 / LMG 18924 / NCIMB 13744 / C4D1M) protein is D-apiose import binding protein.